The primary structure comprises 382 residues: 1-deoxy-D-xylulose 5-phosphate reductoisomerase (382 aa).

The NADPH site is built by threonine 10, glycine 11, serine 12, isoleucine 13, asparagine 38, and asparagine 120. Residue lysine 121 participates in 1-deoxy-D-xylulose 5-phosphate binding. NADPH is bound at residue glutamate 122. A Mn(2+)-binding site is contributed by aspartate 146. Residues serine 147, glutamate 148, serine 172, and histidine 195 each coordinate 1-deoxy-D-xylulose 5-phosphate. Residue glutamate 148 participates in Mn(2+) binding. Glycine 201 provides a ligand contact to NADPH. Serine 208, asparagine 213, lysine 214, and glutamate 217 together coordinate 1-deoxy-D-xylulose 5-phosphate. Residue glutamate 217 coordinates Mn(2+).

It belongs to the DXR family. Requires Mg(2+) as cofactor. Mn(2+) serves as cofactor.

The catalysed reaction is 2-C-methyl-D-erythritol 4-phosphate + NADP(+) = 1-deoxy-D-xylulose 5-phosphate + NADPH + H(+). It functions in the pathway isoprenoid biosynthesis; isopentenyl diphosphate biosynthesis via DXP pathway; isopentenyl diphosphate from 1-deoxy-D-xylulose 5-phosphate: step 1/6. Catalyzes the NADPH-dependent rearrangement and reduction of 1-deoxy-D-xylulose-5-phosphate (DXP) to 2-C-methyl-D-erythritol 4-phosphate (MEP). This is 1-deoxy-D-xylulose 5-phosphate reductoisomerase from Thermoanaerobacter sp. (strain X514).